Here is a 470-residue protein sequence, read N- to C-terminus: Nucleoporin NUP49 (470 aa).

The span at 1–13 (MSLFGTNTTSQTP) shows a compositional bias: polar residues. The disordered stretch occupies residues 1 to 92 (MSLFGTNTTS…STTTTTSQPQ (92 aa)). GLFG repeat units lie at residues 17 to 20 (GLFG), 45 to 48 (GLFG), 63 to 66 (GLFG), 79 to 82 (GLFG), 96 to 99 (GLFG), 111 to 114 (GLFG), 127 to 130 (GLFG), 142 to 145 (GLFG), 156 to 159 (GLFG), 168 to 171 (GLFG), 181 to 184 (GLFG), and 193 to 197 (GLFGQ). The span at 20–31 (GTTTSQSAQTGS) shows a compositional bias: low complexity. A compositionally biased stretch (polar residues) spans 32–74 (LFGTATSQPQQTGGLFGSTATQTPSSQLQSTGLFGSTTATSQP). Low complexity predominate over residues 75 to 92 (QQTGGLFGSTTTTTSQPQ). Residues 196–221 (GQSTTQPQQQQNATPGLTMGQSTNTQ) form a disordered region. Residues 197–206 (QSTTQPQQQQ) show a composition bias toward low complexity. Residues 207 to 221 (NATPGLTMGQSTNTQ) are compositionally biased toward polar residues. Coiled-coil stretches lie at residues 239–270 (TRFNDLTEALQQEIAKIDEEIQKCIRDKEAVD) and 375–401 (FSKTADEMEEMMKKFEKTITEIEAHLT).

It belongs to the nucleoporin GLFG family. As to quaternary structure, component of the nuclear pore complex (NPC). NPC constitutes the exclusive means of nucleocytoplasmic transport. NPCs allow the passive diffusion of ions and small molecules and the active, nuclear transport receptor-mediated bidirectional transport of macromolecules such as proteins, RNAs, ribonucleoparticles (RNPs), and ribosomal subunits across the nuclear envelope. Due to its 8-fold rotational symmetry, all subunits are present with 8 copies or multiples thereof.

It localises to the nucleus. Its subcellular location is the nuclear pore complex. It is found in the nucleus membrane. Functions as a component of the nuclear pore complex (NPC). NPC components, collectively referred to as nucleoporins (NUPs), can play the role of both NPC structural components and of docking or interaction partners for transiently associated nuclear transport factors. Active directional transport is assured by both, a Phe-Gly (FG) repeat affinity gradient for these transport factors across the NPC and a transport cofactor concentration gradient across the nuclear envelope (GSP1 and GSP2 GTPases associated predominantly with GTP in the nucleus, with GDP in the cytoplasm). NUP49 plays an important role in several nuclear transport pathways including poly(A)+ RNA, tRNA, and pre-ribosome transport. The chain is Nucleoporin NUP49 (NUP49) from Chaetomium thermophilum (strain DSM 1495 / CBS 144.50 / IMI 039719) (Thermochaetoides thermophila).